Here is an 81-residue protein sequence, read N- to C-terminus: Acyl carrier protein 2 (81 aa).

The region spanning 1 to 79 (MTETEILERI…DVIGAVQSLL (79 aa)) is the Carrier domain. Ser-39 bears the O-(pantetheine 4'-phosphoryl)serine mark.

The protein belongs to the acyl carrier protein (ACP) family. 4'-phosphopantetheine is transferred from CoA to a specific serine of apo-ACP by AcpS. This modification is essential for activity because fatty acids are bound in thioester linkage to the sulfhydryl of the prosthetic group.

The protein resides in the cytoplasm. It functions in the pathway lipid metabolism; fatty acid biosynthesis. Its function is as follows. Carrier of the growing fatty acid chain in fatty acid biosynthesis. This is Acyl carrier protein 2 from Ralstonia nicotianae (strain ATCC BAA-1114 / GMI1000) (Ralstonia solanacearum).